Here is a 655-residue protein sequence, read N- to C-terminus: Forkhead box protein O1 (655 aa).

2 disordered regions span residues 1-63 (MAEA…SASA) and 116-158 (GCLH…SRRN). Position 24 is a phosphothreonine; by PKB/AKT1 or PKB/AKT2 and SGK1 (threonine 24). Residues 33–63 (SQSNSATSSPAPSGSAAANPDAAAGLPSASA) are compositionally biased toward low complexity. The segment covering 120–141 (PAPPQPPPPGPLSQHPPVPPAA) has biased composition (pro residues). Residues 159–235 (AWGNLSYADL…VQNEGTGKSS (77 aa)) constitute a DNA-binding region (fork-head). DNA-binding regions lie at residues 211-218 (NSIRHNLS) and 234-237 (SSWW). Serine 212, serine 218, serine 234, and serine 235 each carry phosphoserine; by STK4/MST1. The segment at 234 to 344 (SSWWMLNPEG…QDDLGEGDVH (111 aa)) is disordered. Lysine 245 and lysine 248 each carry N6-acetyllysine. Serine 249 is subject to Phosphoserine; by CDK1. Omega-N-methylarginine; by PRMT1 is present on residues arginine 251 and arginine 253. The Nuclear localization signal signature appears at 251-253 (RRR). At serine 256 the chain carries Phosphoserine; by PKB/AKT1 and SGK1. An N6-acetyllysine mark is found at lysine 262, lysine 265, and lysine 274. A compositionally biased stretch (basic residues) spans 264-275 (AKSRSRAAKKKA). The interval 283–563 (GAGDSPGSQF…RLTQVKTPVQ (281 aa)) is sufficient for interaction with NLK. Serine 287 and serine 298 each carry phosphoserine. Positions 309-326 (NWSTFRPRTSSNASTISG) are enriched in polar residues. Serine 319 bears the Phosphoserine; by PKB/AKT1 mark. The residue at position 322 (serine 322) is a Phosphoserine; by CK1 and SGK1. At serine 325 the chain carries Phosphoserine; by CK1. The residue at position 329 (serine 329) is a Phosphoserine; by DYRK1A. Threonine 333 carries the post-translational modification Phosphothreonine. The segment at 363 to 459 (SEISNPENME…GGMSQYNCAP (97 aa)) is required for interaction with RUNX2. Lysine 423 carries the post-translational modification N6-acetyllysine. The short motif at 462 to 466 (LKELL) is the Required for interaction with SIRT1 element. Polar residues predominate over residues 507–534 (YGSQASHNKMMNPSSHTHPGHAQQTSAV). The segment at 507-537 (YGSQASHNKMMNPSSHTHPGHAQQTSAVNGR) is disordered.

Interacts with LRPPRC. Interacts with RUNX2; the interaction inhibits RUNX2 transcriptional activity and mediates the IGF1/insulin-dependent BGLAP expression in osteoblasts Interacts with PPP2R1A; the interaction regulates the dephosphorylation of FOXO1 at Thr-24 and Ser-256 leading to its nuclear import. Interacts (acetylated form) with PPARG. Interacts with XBP1 isoform 2; this interaction is direct and leads to FOXO1 ubiquitination and degradation via the proteasome pathway. Interacts with NLK. Interacts with SIRT1; the interaction results in the deacetylation of FOXO1 leading to activation of FOXO1-mediated transcription of genes involved in DNA repair and stress resistance. Binds to CDK1. Interacts with the 14-3-3 proteins, YWHAG and YWHAZ; the interactions require insulin-stimulated phosphorylation on Thr-24, promote nuclear exit and loss of transcriptional activity. Interacts with SKP2; the interaction ubiquitinates FOXO1 leading to its proteasomal degradation. The interaction requires the presence of KRIT1. Interacts (via the C-terminal half) with ATF4 (via its DNA-binding domain); the interaction occurs in osteoblasts, regulates glucose homeostasis via suppression of beta-cell proliferation and subsequent decrease in insulin production. Interacts with PRMT1; the interaction methylates FOXO1, prevents PKB/AKT1 phosphorylation and retains FOXO1 in the nucleus. Interacts with EP300 and CREBBP; the interactions acetylate FOXO1. Interacts with SIRT2; the interaction is disrupted in response to oxidative stress or serum deprivation, leading to increased level of acetylated FOXO1, which promotes stress-induced autophagy by stimulating E1-like activating enzyme ATG7. Interacts (acetylated form) with ATG7; the interaction is increased in response to oxidative stress or serum deprivation and promotes the autophagic process leading to cell death. Interacts (via the Fork-head domain) with CEBPA; the interaction increases when FOXO1 is deacetylated. Interacts with WDFY2. Forms a complex with WDFY2 and AKT1. Interacts with CRY1. Interacts with PPIA/CYPA; the interaction promotes FOXO1 dephosphorylation, nuclear accumulation and transcriptional activity. Interacts with TOX4; FOXO1 is required for full induction of TOX4-dependent activity and the interaction is inhibited by insulin. Interacts (when phosphorylated on Ser-256) with STUB1/CHIP. Post-translationally, phosphorylation by NLK promotes nuclear export and inhibits the transcriptional activity. In response to growth factors, phosphorylation on Thr-24, Ser-256 and Ser-322 by PKB/AKT1 promotes nuclear export and inactivation of transactivational activity. Phosphorylation on Thr-24 is required for binding 14-3-3 proteins. Phosphorylation of Ser-256 decreases DNA-binding activity and promotes the phosphorylation of Thr-24 and Ser-319, permitting phosphorylation of Ser-322 and Ser-325, probably by CDK1, leading to nuclear exclusion and loss of function. Stress signals, such as response to oxygen or nitric oxide, attenuate the PKB/AKT1-mediated phosphorylation leading to nuclear retention. Phosphorylation of Ser-329 is independent of IGF1 and leads to reduced function. Dephosphorylated on Thr-24 and Ser-256 by PP2A in beta-cells under oxidative stress leading to nuclear retention. Phosphorylation of Ser-249 by CDK1 disrupts binding of 14-3-3 proteins leading to nuclear accumulation and has no effect on DNA-binding nor transcriptional activity. Phosphorylation by STK4/MST1 on Ser-212, upon oxidative stress, inhibits binding to 14-3-3 proteins and nuclear export. PPIA/CYPA promotes its dephosphorylation on Ser-256. Ubiquitinated by SKP2. Ubiquitination leads to proteasomal degradation. Ubiquitinated by STUB1/CHIP; when Ser-256 is phosphorylated. In terms of processing, methylation inhibits AKT1-mediated phosphorylation at Ser-256 and is increased by oxidative stress. Post-translationally, acetylated. Acetylation at Lys-262, Lys-265 and Lys-274 are necessary for autophagic cell death induction. Deacetylated by SIRT2 in response to oxidative stress or serum deprivation, thereby negatively regulating FOXO1-mediated autophagic cell death. Once in the nucleus, acetylated by CREBBP/EP300. Acetylation diminishes the interaction with target DNA and attenuates the transcriptional activity. It increases the phosphorylation at Ser-256. Deacetylation by SIRT1 results in reactivation of the transcriptional activity. Oxidative stress by hydrogen peroxide treatment appears to promote deacetylation and uncoupling of insulin-induced phosphorylation. By contrast, resveratrol acts independently of acetylation. Acetylated at Lys-423, promoting its localization to the nucleus and transcription factor activity. Deacetylation at Lys-423 by SIRT6, promotes its translocation into the cytoplasm, preventing its transcription factor activity. Deacetylation and subsequent inhibition by SIRT6 has different effects depending on cell types: it inhibits gluconeogenesis in hepatocytes, promotes glucose sensing in pancreatic beta-cells and regulates lipid catabolism in brown adipocytes. In terms of tissue distribution, expressed in umbilical endothelial cells (at protein level). Abundantly expressed in skeletal muscle and ovary, with lower expression in the heart, placenta, lung, liver, pancreas, spleen, testis and small intestine. Weakly expressed in the brain, thymus, prostate and mucosal lining of the colon.

It localises to the cytoplasm. Its subcellular location is the nucleus. Its function is as follows. Transcription factor that is the main target of insulin signaling and regulates metabolic homeostasis in response to oxidative stress. Binds to the insulin response element (IRE) with consensus sequence 5'-TT[G/A]TTTTG-3' and the related Daf-16 family binding element (DBE) with consensus sequence 5'-TT[G/A]TTTAC-3'. Activity suppressed by insulin. Main regulator of redox balance and osteoblast numbers and controls bone mass. Orchestrates the endocrine function of the skeleton in regulating glucose metabolism. Also acts as a key regulator of chondrogenic commitment of skeletal progenitor cells in response to lipid availability: when lipids levels are low, translocates to the nucleus and promotes expression of SOX9, which induces chondrogenic commitment and suppresses fatty acid oxidation. Acts synergistically with ATF4 to suppress osteocalcin/BGLAP activity, increasing glucose levels and triggering glucose intolerance and insulin insensitivity. Also suppresses the transcriptional activity of RUNX2, an upstream activator of osteocalcin/BGLAP. Acts as an inhibitor of glucose sensing in pancreatic beta cells by acting as a transcription repressor and suppressing expression of PDX1. In hepatocytes, promotes gluconeogenesis by acting together with PPARGC1A and CEBPA to activate the expression of genes such as IGFBP1, G6PC1 and PCK1. Also promotes gluconeogenesis by directly promoting expression of PPARGC1A and G6PC1. Important regulator of cell death acting downstream of CDK1, PKB/AKT1 and STK4/MST1. Promotes neural cell death. Mediates insulin action on adipose tissue. Regulates the expression of adipogenic genes such as PPARG during preadipocyte differentiation and, adipocyte size and adipose tissue-specific gene expression in response to excessive calorie intake. Regulates the transcriptional activity of GADD45A and repair of nitric oxide-damaged DNA in beta-cells. Required for the autophagic cell death induction in response to starvation or oxidative stress in a transcription-independent manner. Mediates the function of MLIP in cardiomyocytes hypertrophy and cardiac remodeling. Positive regulator of apoptosis in cardiac smooth muscle cells as a result of its transcriptional activation of pro-apoptotic genes. Regulates endothelial cell (EC) viability and apoptosis in a PPIA/CYPA-dependent manner via transcription of CCL2 and BCL2L11 which are involved in EC chemotaxis and apoptosis. This Homo sapiens (Human) protein is Forkhead box protein O1.